A 754-amino-acid polypeptide reads, in one-letter code: Nibrin (754 aa).

The region spanning Tyr24–Met83 is the FHA domain. BRCT domains follow at residues Lys105–Leu181 and Gly224–Ile315. Positions Glu111–His328 are mediates interaction with SP100. The interval Ile221 to Thr402 is interaction with MTOR, MAPKAP1 and RICTOR. Position 278 is a phosphoserine; by ATM (Ser278). The disordered stretch occupies residues Gln326–Val346. Positions His328–Val346 are enriched in polar residues. A Phosphothreonine modification is found at Thr337. Ser343 bears the Phosphoserine; by ATM mark. Position 347 is a phosphoserine (Ser347). N6-lactoyllysine is present on Lys388. Disordered stretches follow at residues Leu396–Ser415 and Gln430–Cys478. Ser397 is modified (phosphoserine). A Phosphothreonine modification is found at Thr402. Composition is skewed to polar residues over residues Gln430–Asn440 and Ser447–Ser462. The residue at position 432 (Ser432) is a Phosphoserine; by CDK2. Lys435 participates in a covalent cross-link: Glycyl lysine isopeptide (Lys-Gly) (interchain with G-Cter in ubiquitin). The Nuclear localization signal signature appears at Pro461–Glu467. Ser509 and Ser518 each carry phosphoserine. Residues Lys529, Lys571, and Lys582 each participate in a glycyl lysine isopeptide (Lys-Gly) (interchain with G-Cter in SUMO2) cross-link. A phosphoserine mark is found at Ser615 and Ser673. Residues Lys686, Lys690, and Lys735 each participate in a glycyl lysine isopeptide (Lys-Gly) (interchain with G-Cter in ubiquitin) cross-link. A FxF/Y motif motif is present at residues Ala740–Tyr749.

This sequence belongs to the Nibrin family. In terms of assembly, component of the MRN complex composed of two heterodimers RAD50 and MRE11 associated with a single NBN. The MRN complexes dimerize on DNA to form joined MRN-MRN oligomers required for DNA double-strand break repair. As part of the MRN complex, interacts with MCM9; the interaction recruits the complex to DNA repair sites. Component of the BASC complex, at least composed of BRCA1, MSH2, MSH6, MLH1, ATM, BLM, RAD50, MRE11 and NBN. Interacts with histone H2AX; this requires phosphorylation of H2AX on 'Ser-139' and promotes NBN recruitment to DNA damage sites. Interacts with (phosphorylated) MDC1; promoting NBN recruitment to DNA damage sites. Interacts with (phosphorylated) RAD17; promoting NBN recruitment to DNA damage sites. Interacts (via FxF/Y motif) with ATM. Interacts with HJURP. Interacts with INTS3. Interacts with KPNA2. Interacts with TERF2; interaction is disrupted upon NBN phosphorylation by CDK2. Interacts with (phosphorylated) RBBP8/CtIP; the interaction links the role of the MRN complex in DNA double-strand break sensing to resection. Interacts with SP100; recruits NBN to PML bodies. Interacts with ATF2. Interacts with MTOR, MAPKAP1 isoform 2 and RICTOR; indicative for an association with the mTORC2 complex. Interacts with MRNIP. Interacts with UFL1; promoting UFL1 recruitment to double-strand breaks following DNA damage. Interacts with CYREN (via XLF motif). (Microbial infection) Interacts with herpes simplex virus 1 protein UL12. In terms of processing, phosphorylated by ATM in response of ionizing radiation, and such phosphorylation is responsible intra-S phase checkpoint control and telomere maintenance. Phosphorylated at Ser-432 by CDK2 in S/G2 phases abolishes interaction with TERF2, enabling DCLRE1B/Apollo recruitment to telomeres. Phosphorylation at Ser-432 in response to dysfunctional telomeres promotes non-homologous end joining repair at telomeres, while dephosphorylation by PPP1CA promotes microhomology-mediated end-joining (MMEJ) repair. Post-translationally, ubiquitinated at Lys-435 via 'Lys-6'-linked ubiquitin chains by RNF8, promoting NBN recruitment to DNA double-strand breaks (DSBs). Ubiquitinated at Lys-686 and Lys-689 via 'Lys-63'-linked ubiquitin chains by PELI1: ubiquitination takes place following PELI1 phosphorylation and promotes ATM activation and DNA repair. Ubiquitinated at Lys-735 via 'Lys-63'-linked ubiquitin chains by the SCF(SKP2) complex: ubiquitination takes place following SKP2 phosphorylation and promotes ATM activation and DNA repair. Lactylation at Lys-388 by KAT5 in response to DNA damage promotes recruitment of the MRN complex to DNA damage sites. Delactylated by HDAC3. In terms of tissue distribution, ubiquitous. Expressed at high levels in testis.

Its subcellular location is the nucleus. The protein localises to the chromosome. The protein resides in the PML body. It is found in the telomere. Component of the MRN complex, which plays a central role in double-strand break (DSB) repair, DNA recombination, maintenance of telomere integrity and meiosis. The MRN complex is involved in the repair of DNA double-strand breaks (DSBs) via homologous recombination (HR), an error-free mechanism which primarily occurs during S and G2 phases. The complex (1) mediates the end resection of damaged DNA, which generates proper single-stranded DNA, a key initial steps in HR, and is (2) required for the recruitment of other repair factors and efficient activation of ATM and ATR upon DNA damage. The MRN complex possesses single-strand endonuclease activity and double-strand-specific 3'-5' exonuclease activity, which are provided by MRE11, to initiate end resection, which is required for single-strand invasion and recombination. Within the MRN complex, NBN acts as a protein-protein adapter, which specifically recognizes and binds phosphorylated proteins, promoting their recruitment to DNA damage sites. Recruits MRE11 and RAD50 components of the MRN complex to DSBs in response to DNA damage. Promotes the recruitment of PI3/PI4-kinase family members ATM, ATR, and probably DNA-PKcs to the DNA damage sites, activating their functions. Mediates the recruitment of phosphorylated RBBP8/CtIP to DSBs, leading to cooperation between the MRN complex and RBBP8/CtIP to initiate end resection. RBBP8/CtIP specifically promotes the endonuclease activity of the MRN complex to clear DNA ends containing protein adducts. The MRN complex is also required for the processing of R-loops. NBN also functions in telomere length maintenance via its interaction with TERF2: interaction with TERF2 during G1 phase preventing recruitment of DCLRE1B/Apollo to telomeres. NBN also promotes DNA repair choice at dysfunctional telomeres: NBN phosphorylation by CDK2 promotes non-homologous end joining repair at telomeres, while unphosphorylated NBN promotes microhomology-mediated end-joining (MMEJ) repair. Enhances AKT1 phosphorylation possibly by association with the mTORC2 complex. This is Nibrin from Homo sapiens (Human).